We begin with the raw amino-acid sequence, 167 residues long: uncharacterized protein (167 aa).

This is an uncharacterized protein from Pasteurella multocida (strain Pm70).